We begin with the raw amino-acid sequence, 393 residues long: Dual-specificity RNA methyltransferase RlmN (393 aa).

The Proton acceptor role is filled by Glu-115. The region spanning 121 to 365 (EEDRGTLCIS…APIRKTRGDD (245 aa)) is the Radical SAM core domain. Cys-128 and Cys-370 form a disulfide bridge. 3 residues coordinate [4Fe-4S] cluster: Cys-135, Cys-139, and Cys-142. S-adenosyl-L-methionine is bound by residues 194–195 (GE), Ser-226, 248–250 (SFH), and Asn-327. Catalysis depends on Cys-370, which acts as the S-methylcysteine intermediate.

This sequence belongs to the radical SAM superfamily. RlmN family. The cofactor is [4Fe-4S] cluster.

It is found in the cytoplasm. It catalyses the reaction adenosine(2503) in 23S rRNA + 2 reduced [2Fe-2S]-[ferredoxin] + 2 S-adenosyl-L-methionine = 2-methyladenosine(2503) in 23S rRNA + 5'-deoxyadenosine + L-methionine + 2 oxidized [2Fe-2S]-[ferredoxin] + S-adenosyl-L-homocysteine. The catalysed reaction is adenosine(37) in tRNA + 2 reduced [2Fe-2S]-[ferredoxin] + 2 S-adenosyl-L-methionine = 2-methyladenosine(37) in tRNA + 5'-deoxyadenosine + L-methionine + 2 oxidized [2Fe-2S]-[ferredoxin] + S-adenosyl-L-homocysteine. Its function is as follows. Specifically methylates position 2 of adenine 2503 in 23S rRNA and position 2 of adenine 37 in tRNAs. m2A2503 modification seems to play a crucial role in the proofreading step occurring at the peptidyl transferase center and thus would serve to optimize ribosomal fidelity. This Ruegeria pomeroyi (strain ATCC 700808 / DSM 15171 / DSS-3) (Silicibacter pomeroyi) protein is Dual-specificity RNA methyltransferase RlmN.